The primary structure comprises 245 residues: Protein mlo1 (245 aa).

The region spanning 4-38 is the SAP domain; it reads YKSLKVAELREKLAEKGLSTAGNKAELVSRLTAAT. The segment at 32–245 is disordered; the sequence is SRLTAATESN…AERFGVAAKN (214 aa). Positions 37–52 are enriched in low complexity; that stretch reads ATESNDENTSNNNATD. Acidic residues predominate over residues 58–70; that stretch reads PPEDDIDWGDMEN. Positions 109–118 are enriched in polar residues; it reads TSQAPETSTG. The segment covering 119-130 has biased composition (basic and acidic residues); the sequence is AEEHQETTEESK. Ser-139 is modified (phosphoserine). Residues 182 to 196 show a composition bias toward low complexity; sequence SSNNKNHNQSKNPQN.

This sequence belongs to the SAP domain-containing ribonucleoprotein family.

The polypeptide is Protein mlo1 (mlo1) (Schizosaccharomyces pombe (strain 972 / ATCC 24843) (Fission yeast)).